The primary structure comprises 620 residues: Probable potassium transport system protein Kup (620 aa).

Helical transmembrane passes span leucine 7–isoleucine 27, valine 44–leucine 64, phenylalanine 98–threonine 118, proline 135–phenylalanine 155, leucine 166–isoleucine 186, glycine 201–leucine 221, tryptophan 245–leucine 265, leucine 278–alanine 298, isoleucine 335–phenylalanine 355, leucine 361–tyrosine 381, valine 394–alanine 414, and leucine 417–threonine 437.

It belongs to the HAK/KUP transporter (TC 2.A.72) family.

The protein localises to the cell inner membrane. It catalyses the reaction K(+)(in) + H(+)(in) = K(+)(out) + H(+)(out). Transport of potassium into the cell. Likely operates as a K(+):H(+) symporter. This chain is Probable potassium transport system protein Kup, found in Chlorobium chlorochromatii (strain CaD3).